We begin with the raw amino-acid sequence, 444 residues long: MAESLHIVGAGMAGSEAAWQAAEMGVPVVLHEMRPKVGTFAHRTGQFAEMVCSNSFRSDDDERNAVGLLHWEMRAARGLIMEMAAAHRLPAGGALAVDRDPFAESVTARLRAHPLISVVEEEVAELPSSGNWIVATGPLTSSALAESLRALTGAEALAFFDAIAPIVYAETIDMEVAWRQSRYDKGETEDERTAYINCPMNREQYEAFIDALLAAEKTEFHEGETAGYFDGCLPIEVMAERGRETLRHGPMKPVGLTNAHRPEEKAYAVVQLRRDNKLGTLYNIVGFQTKMKYGAQTAVFKMIPGLENASFARLGGIHRNTFLNSPTLLDDRMRLKLRPNIRFAGQVTGVEGYVESAAMGLLAGRMAAAEILGRDLPPPPPETAMGALVTHITGGAEAKSFQPMNVNFGLFPPIDARGGRRGRKDRYKAYTDRAKAAFTEWLGA.

An FAD-binding site is contributed by 9–14 (GAGMAG).

This sequence belongs to the MnmG family. TrmFO subfamily. Requires FAD as cofactor.

It is found in the cytoplasm. It carries out the reaction uridine(54) in tRNA + (6R)-5,10-methylene-5,6,7,8-tetrahydrofolate + NADH + H(+) = 5-methyluridine(54) in tRNA + (6S)-5,6,7,8-tetrahydrofolate + NAD(+). The catalysed reaction is uridine(54) in tRNA + (6R)-5,10-methylene-5,6,7,8-tetrahydrofolate + NADPH + H(+) = 5-methyluridine(54) in tRNA + (6S)-5,6,7,8-tetrahydrofolate + NADP(+). In terms of biological role, catalyzes the folate-dependent formation of 5-methyl-uridine at position 54 (M-5-U54) in all tRNAs. The polypeptide is Methylenetetrahydrofolate--tRNA-(uracil-5-)-methyltransferase TrmFO (Cereibacter sphaeroides (strain KD131 / KCTC 12085) (Rhodobacter sphaeroides)).